Consider the following 449-residue polypeptide: Probable D-serine dehydratase (449 aa).

Lys-119 bears the N6-(pyridoxal phosphate)lysine mark.

The protein belongs to the serine/threonine dehydratase family. DsdA subfamily. It depends on pyridoxal 5'-phosphate as a cofactor.

It catalyses the reaction D-serine = pyruvate + NH4(+). The chain is Probable D-serine dehydratase from Pseudomonas putida (strain ATCC 700007 / DSM 6899 / JCM 31910 / BCRC 17059 / LMG 24140 / F1).